Consider the following 239-residue polypeptide: Cysteine-rich venom protein ENH1 (239 aa).

Residues 1 to 18 (MIVFILLSLAAVLQQFVA) form the signal peptide. Residues 37-165 (VDMHNSFRRS…PYNYFYVCQY (129 aa)) enclose the SCP domain. 7 cysteine pairs are disulfide-bonded: Cys-74–Cys-152, Cys-91–Cys-166, Cys-147–Cys-163, Cys-185–Cys-192, Cys-188–Cys-197, Cys-210–Cys-228, and Cys-219–Cys-232. In terms of domain architecture, ShKT spans 201–234 (CPITNTFTNCDSLLQQNSCEDSYIKTNCGASCFC).

Belongs to the CRISP family. In terms of tissue distribution, expressed by the venom gland.

It localises to the secreted. In terms of biological role, blocks contraction of smooth muscle elicited by high potassium-induced depolarization, but does not block caffeine-stimulated contraction. May target voltage-gated calcium channels on smooth muscle. In Pseudoferania polylepis (Macleay's water snake), this protein is Cysteine-rich venom protein ENH1.